A 144-amino-acid polypeptide reads, in one-letter code: Deoxyuridine 5'-triphosphate nucleotidohydrolase (144 aa).

Residues arginine 63 to glycine 65, asparagine 76, and threonine 80 to aspartate 82 each bind substrate.

This sequence belongs to the dUTPase family. The cofactor is Mg(2+).

The enzyme catalyses dUTP + H2O = dUMP + diphosphate + H(+). Its pathway is pyrimidine metabolism; dUMP biosynthesis; dUMP from dCTP (dUTP route): step 2/2. This enzyme is involved in nucleotide metabolism: it produces dUMP, the immediate precursor of thymidine nucleotides and it decreases the intracellular concentration of dUTP so that uracil cannot be incorporated into DNA. The polypeptide is Deoxyuridine 5'-triphosphate nucleotidohydrolase (Bacteroides fragilis (strain YCH46)).